The chain runs to 412 residues: Divalent metal cation transporter MntH (412 aa).

The next 11 membrane-spanning stretches (helical) occupy residues 19–39 (FALMGPAFIAAIGYIDPGNFA), 46–66 (ASFGYKLLWVVVWANLMAMLI), 94–114 (VWFYWVQAEIIAMATDLAEFI), 122–142 (LILGVSLLQGAVLTGIATFLI), 155–175 (LVIGGLLLFVAAAYIVELVFS), 196–216 (AVFLAAGVLGATIMPHVIYLH), 241–261 (IAMTIAGFVNLAMMATAAAAF), 290–310 (IFGLSLVAAGLSSTVVGTLAG), 329–349 (SVTMMPSFIVILMGLDPTRIL), 350–370 (VMSQVLLSFGIALALVPLLIF), and 389–409 (IGWMIVVLVVALNLWLLIGTL).

The protein belongs to the NRAMP family.

It is found in the cell inner membrane. H(+)-stimulated, divalent metal cation uptake system. The chain is Divalent metal cation transporter MntH from Enterobacter sp. (strain 638).